Here is a 778-residue protein sequence, read N- to C-terminus: Subtilisin-like protease SBT5.4 (778 aa).

A signal peptide spans Met-1–Ala-35. The region spanning Ser-41–His-126 is the Inhibitor I9 domain. In terms of domain architecture, Peptidase S8 spans Ser-130–Ala-634. Asp-163 functions as the Charge relay system in the catalytic mechanism. N-linked (GlcNAc...) asparagine glycosylation is present at Asn-218. The active-site Charge relay system is His-230. N-linked (GlcNAc...) asparagine glycans are attached at residues Asn-253 and Asn-404. The region spanning Ala-401–Leu-486 is the PA domain. Catalysis depends on Ser-567, which acts as the Charge relay system. 3 N-linked (GlcNAc...) asparagine glycosylation sites follow: Asn-657, Asn-690, and Asn-732.

Belongs to the peptidase S8 family. In terms of tissue distribution, expressed in the vasculature of roots and leaves, stomata, sepals, stigma, anthers and siliques.

The protein resides in the endoplasmic reticulum. It localises to the cell membrane. Serine protease. Has a substrate preference for the hydrophobic residues Phe and Ala and the basic residue Asp in the P1 position, and for Asp, Leu or Ala in the P1' position. Interferes with CLAVATA 3 (CLV3) signaling, but does not cleave CLV3. The sequence is that of Subtilisin-like protease SBT5.4 from Arabidopsis thaliana (Mouse-ear cress).